A 207-amino-acid chain; its full sequence is Cytidylate kinase (207 aa).

7–15 (GVAASGKSS) is a binding site for ATP.

The protein belongs to the cytidylate kinase family. Type 1 subfamily.

It is found in the cytoplasm. It carries out the reaction CMP + ATP = CDP + ADP. The enzyme catalyses dCMP + ATP = dCDP + ADP. This chain is Cytidylate kinase, found in Deinococcus deserti (strain DSM 17065 / CIP 109153 / LMG 22923 / VCD115).